The primary structure comprises 375 residues: Fluoride export protein 2 (375 aa).

The Cytoplasmic segment spans residues 1-11 (MIFNPVISNHK). A helical transmembrane segment spans residues 12–32 (LSHYIHVFCTFTTFCILGTET). The Extracellular segment spans residues 33–34 (RQ). Residues 35–55 (AITALSTYTPAFVTAPTVLWS) form a helical membrane-spanning segment. The Cytoplasmic portion of the chain corresponds to 56-79 (NCSSCMLMGIMQSLNAYTWMKDHQ). A helical membrane pass occupies residues 80 to 100 (VLFLGVTTGYCGALSSFSSML). Residues 101 to 127 (LEMFEHSTNLTNGNIANHTKLPNRAYG) are Extracellular-facing. Residues N109 and N117 are each glycosylated (N-linked (GlcNAc...) asparagine). The helical transmembrane segment at 128-148 (IMEFLSVLLVHLMVSMGSLIF) threads the bilayer. The Cytoplasmic portion of the chain corresponds to 149–213 (GRQLGKEVIV…FKKFFDVVDK (65 aa)). Residues 214–234 (LAYALAFPLIILFVVLCAYYE) traverse the membrane as a helical segment. N235 carries N-linked (GlcNAc...) asparagine glycosylation. Over 235-241 (NYSRGKW) the chain is Extracellular. Residues 242-262 (TLPCLFGIFAGFLRYWLAEMF) traverse the membrane as a helical segment. The Cytoplasmic portion of the chain corresponds to 263–268 (NKTNKK). Residues 269-289 (FPLGTFLANVFATLLIGIFTM) form a helical membrane-spanning segment. Topologically, residues 290–310 (VQRGKKHFSTDIPIVNSLNSC) are extracellular. Residues 311–331 (HIVSALISGFCGTLSTISTFI) form a helical membrane-spanning segment. Topologically, residues 332–338 (NEGYKLS) are cytoplasmic. The chain crosses the membrane as a helical span at residues 339–359 (FINMLIYYTVSIGISYCLLVI). The Extracellular segment spans residues 360-375 (TLGSYAWTRGLTNPIC).

The protein belongs to the fluoride channel Fluc/FEX (TC 1.A.43) family.

It is found in the cell membrane. The enzyme catalyses fluoride(in) = fluoride(out). In terms of biological role, fluoride channel required for the rapid expulsion of cytoplasmic fluoride. In Saccharomyces cerevisiae (strain ATCC 204508 / S288c) (Baker's yeast), this protein is Fluoride export protein 2.